Reading from the N-terminus, the 206-residue chain is Macrophage immunometabolism regulator (206 aa).

An N-acetylmethionine modification is found at M1. The disordered stretch occupies residues M1–C41. 3 positions are modified to phosphoserine: S25, S140, and S167.

Belongs to the UNC119-binding protein family. Interacts with UNC119 and UNC119B; interaction preferentially takes place when UNC119 and UNC119B are unliganded with myristoylated proteins.

The protein resides in the cytoplasm. It localises to the cell projection. The protein localises to the cilium. In terms of biological role, regulates the macrophage function, by enhancing the resolution of inflammation and wound repair functions mediated by M2 macrophages. The regulation of macrophage function is, due at least in part, to its ability to inhibit glycolysis. May also play a role in trafficking of proteins via its interaction with UNC119 and UNC119B cargo adapters: may help the release of UNC119 and UNC119B cargo or the recycling of UNC119 and UNC119B. May play a role in ciliary membrane localization via its interaction with UNC119B and protein transport into photoreceptor cells. This Pongo abelii (Sumatran orangutan) protein is Macrophage immunometabolism regulator (MACIR).